The primary structure comprises 132 residues: Phosphomevalonate dehydratase small subunit (132 aa).

The Proton acceptor role is filled by Ser61.

The protein belongs to the AcnX type II small subunit family. Heterodimer composed of a large subunit (PMDh-L) and a small subunit (PMDh-S).

It carries out the reaction (R)-5-phosphomevalonate = (2E)-3-methyl-5-phosphooxypent-2-enoate + H2O. It functions in the pathway isoprenoid biosynthesis; isopentenyl diphosphate biosynthesis via mevalonate pathway. Component of a hydro-lyase that catalyzes the dehydration of mevalonate 5-phosphate (MVA5P) to form trans-anhydromevalonate 5-phosphate (tAHMP). Involved in the archaeal mevalonate (MVA) pathway, which provides fundamental precursors for isoprenoid biosynthesis, such as isopentenyl diphosphate (IPP) and dimethylallyl diphosphate (DMAPP). This Archaeoglobus fulgidus (strain ATCC 49558 / DSM 4304 / JCM 9628 / NBRC 100126 / VC-16) protein is Phosphomevalonate dehydratase small subunit.